The primary structure comprises 205 residues: Glycerol-3-phosphate acyltransferase (205 aa).

The next 5 helical transmembrane spans lie at 6-26 (STVL…AVVV), 55-75 (KAAI…VWLV), 89-109 (VALV…FRFV), 120-140 (ILLA…LVIA), and 162-182 (ALMF…VLLI).

Belongs to the PlsY family. Probably interacts with PlsX.

It localises to the cell inner membrane. The enzyme catalyses an acyl phosphate + sn-glycerol 3-phosphate = a 1-acyl-sn-glycero-3-phosphate + phosphate. It participates in lipid metabolism; phospholipid metabolism. In terms of biological role, catalyzes the transfer of an acyl group from acyl-phosphate (acyl-PO(4)) to glycerol-3-phosphate (G3P) to form lysophosphatidic acid (LPA). This enzyme utilizes acyl-phosphate as fatty acyl donor, but not acyl-CoA or acyl-ACP. This is Glycerol-3-phosphate acyltransferase from Herminiimonas arsenicoxydans.